The chain runs to 79 residues: Dolichyl-diphosphooligosaccharide--protein glycosyltransferase subunit TMEM258 (79 aa).

2 consecutive transmembrane segments (helical) span residues leucine 18–methionine 38 and phenylalanine 55–valine 75.

It belongs to the OST5 family. Component of the oligosaccharyltransferase (OST) complex.

It is found in the membrane. It participates in protein modification; protein glycosylation. Its function is as follows. Subunit of the oligosaccharyl transferase (OST) complex that catalyzes the initial transfer of a defined glycan (Glc(3)Man(9)GlcNAc(2) in eukaryotes) from the lipid carrier dolichol-pyrophosphate to an asparagine residue within an Asn-X-Ser/Thr consensus motif in nascent polypeptide chains, the first step in protein N-glycosylation. N-glycosylation occurs cotranslationally and the complex associates with the Sec61 complex at the channel-forming translocon complex that mediates protein translocation across the endoplasmic reticulum (ER). All subunits are required for a maximal enzyme activity. The protein is Dolichyl-diphosphooligosaccharide--protein glycosyltransferase subunit TMEM258 of Caenorhabditis briggsae.